The following is a 121-amino-acid chain: Small ribosomal subunit protein uS13 (121 aa).

Positions 92–121 (RKGLPVRGQRTKTNARTRKGPRKSGVQLKK) are disordered.

It belongs to the universal ribosomal protein uS13 family. Part of the 30S ribosomal subunit. Forms a loose heterodimer with protein S19. Forms two bridges to the 50S subunit in the 70S ribosome.

Functionally, located at the top of the head of the 30S subunit, it contacts several helices of the 16S rRNA. In the 70S ribosome it contacts the 23S rRNA (bridge B1a) and protein L5 of the 50S subunit (bridge B1b), connecting the 2 subunits; these bridges are implicated in subunit movement. Contacts the tRNAs in the A and P-sites. The chain is Small ribosomal subunit protein uS13 from Polynucleobacter asymbioticus (strain DSM 18221 / CIP 109841 / QLW-P1DMWA-1) (Polynucleobacter necessarius subsp. asymbioticus).